Here is a 253-residue protein sequence, read N- to C-terminus: MKIDILTLFPEMFYGPLNSSILKKAQEKGIITINYINIRDFTTDRHHQADDKPYGGGAGMVMKVEPIIKAYEAIPKNNSFTIMLSPQGRKFNQKLARELSQKEHLIFICGHYEGIDERVRQLIVDEEISIGDYILTGGEIAAMVIIDAVARLVPGVLGDEVSAEEESFSDQLLEYPHYTRPRNFRGLEVPEVLLSGNHKKIDLWRKKQSLLNTLFRRRDLLKVRGLTKEEKILLWQGFFELAMLIDEIPERSE.

Residues Gly110 and 130 to 135 contribute to the S-adenosyl-L-methionine site; that span reads IGDYIL.

Belongs to the RNA methyltransferase TrmD family. As to quaternary structure, homodimer.

The protein localises to the cytoplasm. It catalyses the reaction guanosine(37) in tRNA + S-adenosyl-L-methionine = N(1)-methylguanosine(37) in tRNA + S-adenosyl-L-homocysteine + H(+). Functionally, specifically methylates guanosine-37 in various tRNAs. In Carboxydothermus hydrogenoformans (strain ATCC BAA-161 / DSM 6008 / Z-2901), this protein is tRNA (guanine-N(1)-)-methyltransferase.